Reading from the N-terminus, the 477-residue chain is Glycogen synthase (477 aa).

K15 contributes to the ADP-alpha-D-glucose binding site.

Belongs to the glycosyltransferase 1 family. Bacterial/plant glycogen synthase subfamily.

It carries out the reaction [(1-&gt;4)-alpha-D-glucosyl](n) + ADP-alpha-D-glucose = [(1-&gt;4)-alpha-D-glucosyl](n+1) + ADP + H(+). It participates in glycan biosynthesis; glycogen biosynthesis. In terms of biological role, synthesizes alpha-1,4-glucan chains using ADP-glucose. This is Glycogen synthase from Escherichia fergusonii (strain ATCC 35469 / DSM 13698 / CCUG 18766 / IAM 14443 / JCM 21226 / LMG 7866 / NBRC 102419 / NCTC 12128 / CDC 0568-73).